The sequence spans 201 residues: Pro-P-factor (201 aa).

An N-terminal signal peptide occupies residues 1–20 (MKITAVIALLFSLAAASPIP). 5 propeptides span residues 21 to 31 (VADPGVVSVSK), 58 to 65 (EFEAAPAK), 92 to 99 (EFEAAPEK), 126 to 133 (EFEAAPAK), and 160 to 201 (TEED…KFES). 2 N-linked (GlcNAc...) asparagine glycosylation sites follow: Asn-187 and Asn-194.

Proteolytically cleaved by kpr, probably at the C-terminal side of dibasic Lys-Arg residues. Post-translationally, glycosylated. Most of the precursor molecules are glycosylated on at least one site, but only a small proportion are glycosylated on both sites.

Its subcellular location is the secreted. In terms of biological role, in h- cells under nutritional starvation, P-factor induces alteration of cell morphology toward mating, arrest of the cell cycle at the G1 phase prior to the initiation of DNA synthesis and indirect transcriptional activation of the sxa2 gene which down-regulates the signaling pathway. The polypeptide is Pro-P-factor (map2) (Schizosaccharomyces pombe (strain 972 / ATCC 24843) (Fission yeast)).